We begin with the raw amino-acid sequence, 286 residues long: 4-diphosphocytidyl-2-C-methyl-D-erythritol kinase (286 aa).

Residue K13 is part of the active site. Position 96 to 106 (96 to 106 (PMGGGIGGGSS)) interacts with ATP. Residue D138 is part of the active site.

The protein belongs to the GHMP kinase family. IspE subfamily.

The enzyme catalyses 4-CDP-2-C-methyl-D-erythritol + ATP = 4-CDP-2-C-methyl-D-erythritol 2-phosphate + ADP + H(+). Its pathway is isoprenoid biosynthesis; isopentenyl diphosphate biosynthesis via DXP pathway; isopentenyl diphosphate from 1-deoxy-D-xylulose 5-phosphate: step 3/6. Functionally, catalyzes the phosphorylation of the position 2 hydroxy group of 4-diphosphocytidyl-2C-methyl-D-erythritol. The sequence is that of 4-diphosphocytidyl-2-C-methyl-D-erythritol kinase from Pseudoalteromonas atlantica (strain T6c / ATCC BAA-1087).